Here is a 353-residue protein sequence, read N- to C-terminus: Photosystem II protein D1 (353 aa).

T2 bears the N-acetylthreonine mark. T2 carries the phosphothreonine modification. A run of 3 helical transmembrane segments spans residues 29 to 46, 118 to 133, and 142 to 156; these read YIGWFGVLMIPLLLTATS, HFLLGVCCYMGREWEL, and WIAVAYSAPVAAATA. H118 serves as a coordination point for chlorophyll a. Pheophytin a is bound at residue Y126. 2 residues coordinate [CaMn4O5] cluster: D170 and E189. Residues 197-218 form a helical membrane-spanning segment; the sequence is FHMLGVAGVFGGSLFSAMHGSL. Chlorophyll a is bound at residue H198. A quinone is bound by residues H215 and 264 to 265; that span reads SF. Residue H215 coordinates Fe cation. Residue H272 coordinates Fe cation. The chain crosses the membrane as a helical span at residues 274–288; it reads FLAAWPVIGIWFTAL. [CaMn4O5] cluster is bound by residues H332, E333, D342, and A344. The propeptide occupies 345-353; that stretch reads SVEAPSVNG.

The protein belongs to the reaction center PufL/M/PsbA/D family. In terms of assembly, PSII is composed of 1 copy each of membrane proteins PsbA, PsbB, PsbC, PsbD, PsbE, PsbF, PsbH, PsbI, PsbJ, PsbK, PsbL, PsbM, PsbT, PsbX, PsbY, PsbZ, Psb30/Ycf12, at least 3 peripheral proteins of the oxygen-evolving complex and a large number of cofactors. It forms dimeric complexes. Requires The D1/D2 heterodimer binds P680, chlorophylls that are the primary electron donor of PSII, and subsequent electron acceptors. It shares a non-heme iron and each subunit binds pheophytin, quinone, additional chlorophylls, carotenoids and lipids. D1 provides most of the ligands for the Mn4-Ca-O5 cluster of the oxygen-evolving complex (OEC). There is also a Cl(-1) ion associated with D1 and D2, which is required for oxygen evolution. The PSII complex binds additional chlorophylls, carotenoids and specific lipids. as cofactor. In terms of processing, tyr-161 forms a radical intermediate that is referred to as redox-active TyrZ, YZ or Y-Z. Post-translationally, C-terminally processed by CTPA; processing is essential to allow assembly of the oxygen-evolving complex and thus photosynthetic growth.

Its subcellular location is the plastid. The protein localises to the chloroplast thylakoid membrane. It catalyses the reaction 2 a plastoquinone + 4 hnu + 2 H2O = 2 a plastoquinol + O2. In terms of biological role, photosystem II (PSII) is a light-driven water:plastoquinone oxidoreductase that uses light energy to abstract electrons from H(2)O, generating O(2) and a proton gradient subsequently used for ATP formation. It consists of a core antenna complex that captures photons, and an electron transfer chain that converts photonic excitation into a charge separation. The D1/D2 (PsbA/PsbD) reaction center heterodimer binds P680, the primary electron donor of PSII as well as several subsequent electron acceptors. This chain is Photosystem II protein D1, found in Chlorokybus atmophyticus (Soil alga).